The sequence spans 396 residues: Elongation factor Tu (396 aa).

The tr-type G domain occupies 10–206 (KPHVNVGTIG…ALDTYIPLPE (197 aa)). A G1 region spans residues 19-26 (GHVDHGKT). 19-26 (GHVDHGKT) is a binding site for GTP. Residue Thr26 participates in Mg(2+) binding. The tract at residues 60-64 (GITIN) is G2. The G3 stretch occupies residues 81–84 (DCPG). Residues 81–85 (DCPGH) and 136–139 (NKCD) each bind GTP. Positions 136 to 139 (NKCD) are G4. The interval 174–176 (SAK) is G5.

This sequence belongs to the TRAFAC class translation factor GTPase superfamily. Classic translation factor GTPase family. EF-Tu/EF-1A subfamily. As to quaternary structure, monomer.

It localises to the cytoplasm. The catalysed reaction is GTP + H2O = GDP + phosphate + H(+). Functionally, GTP hydrolase that promotes the GTP-dependent binding of aminoacyl-tRNA to the A-site of ribosomes during protein biosynthesis. This chain is Elongation factor Tu, found in Polaromonas sp. (strain JS666 / ATCC BAA-500).